A 586-amino-acid chain; its full sequence is GRB2-associated-binding protein 3 (586 aa).

The 113-residue stretch at 5 to 117 folds into the PH domain; sequence DAVCTGWLVK…WVHSISQVCN (113 aa). Disordered stretches follow at residues 149–171 and 281–335; these read AHAA…TEET and SSTI…KKPE. A compositionally biased stretch (polar residues) spans 283–292; the sequence is TIQVDKNQGS. Residues 316-326 are compositionally biased toward basic and acidic residues; the sequence is HLSERRQEEWS. Ser-344 is subject to Phosphoserine. A disordered region spans residues 401–453; it reads GASGLGPHCSPDDYIPMNSGSISSPLPELPANLEPPPVNRDLKPQRKSRPPPL. Ser-482 is subject to Phosphoserine.

It belongs to the GAB family. In terms of assembly, interacts with PIK3R/p85, SHP2 and GRAP2/MONA. May interact with Grb2. Post-translationally, phosphorylated on tyrosine residue(s) after macrophage colony-stimulating factor (M-CSF) receptor stimulation.

This chain is GRB2-associated-binding protein 3 (GAB3), found in Homo sapiens (Human).